A 100-amino-acid chain; its full sequence is Large ribosomal subunit protein bL21 (100 aa).

The protein belongs to the bacterial ribosomal protein bL21 family. As to quaternary structure, part of the 50S ribosomal subunit. Contacts protein L20.

Functionally, this protein binds to 23S rRNA in the presence of protein L20. The polypeptide is Large ribosomal subunit protein bL21 (Corynebacterium kroppenstedtii (strain DSM 44385 / JCM 11950 / CIP 105744 / CCUG 35717)).